A 96-amino-acid chain; its full sequence is UPF0125 protein YfjF (96 aa).

This sequence belongs to the UPF0125 (RnfH) family.

This is UPF0125 protein YfjF (yfjF) from Escherichia coli O157:H7.